A 140-amino-acid polypeptide reads, in one-letter code: Large ribosomal subunit protein bL17 (140 aa).

Positions glutamate 120–alanine 140 are disordered.

Belongs to the bacterial ribosomal protein bL17 family. In terms of assembly, part of the 50S ribosomal subunit. Contacts protein L32.

The polypeptide is Large ribosomal subunit protein bL17 (Erythrobacter litoralis (strain HTCC2594)).